Reading from the N-terminus, the 297-residue chain is Aspartate carbamoyltransferase catalytic subunit (297 aa).

Residues arginine 51 and threonine 52 each contribute to the carbamoyl phosphate site. Lysine 79 provides a ligand contact to L-aspartate. Carbamoyl phosphate is bound by residues arginine 101, histidine 129, and glutamine 132. 2 residues coordinate L-aspartate: arginine 162 and arginine 216. Glycine 257 and proline 258 together coordinate carbamoyl phosphate.

It belongs to the aspartate/ornithine carbamoyltransferase superfamily. ATCase family. In terms of assembly, heterododecamer (2C3:3R2) of six catalytic PyrB chains organized as two trimers (C3), and six regulatory PyrI chains organized as three dimers (R2).

It catalyses the reaction carbamoyl phosphate + L-aspartate = N-carbamoyl-L-aspartate + phosphate + H(+). It participates in pyrimidine metabolism; UMP biosynthesis via de novo pathway; (S)-dihydroorotate from bicarbonate: step 2/3. Functionally, catalyzes the condensation of carbamoyl phosphate and aspartate to form carbamoyl aspartate and inorganic phosphate, the committed step in the de novo pyrimidine nucleotide biosynthesis pathway. This chain is Aspartate carbamoyltransferase catalytic subunit, found in Myxococcus xanthus (strain DK1622).